The sequence spans 480 residues: Adenosylhomocysteinase (480 aa).

T63, D142, and E203 together coordinate substrate. 204–206 (TTT) contributes to the NAD(+) binding site. Residues K233 and D237 each coordinate substrate. Residues N238, 267-272 (GYGDVG), E290, N325, 346-348 (IGH), and N394 each bind NAD(+).

The protein belongs to the adenosylhomocysteinase family. NAD(+) serves as cofactor.

The protein resides in the cytoplasm. It carries out the reaction S-adenosyl-L-homocysteine + H2O = L-homocysteine + adenosine. Its pathway is amino-acid biosynthesis; L-homocysteine biosynthesis; L-homocysteine from S-adenosyl-L-homocysteine: step 1/1. Functionally, may play a key role in the regulation of the intracellular concentration of adenosylhomocysteine. The sequence is that of Adenosylhomocysteinase from Xylella fastidiosa (strain 9a5c).